A 141-amino-acid chain; its full sequence is Lysozyme P (141 aa).

A signal peptide spans 1 to 18; sequence MKAFLVICALTLTAVATQ. The region spanning 20-141 is the C-type lysozyme domain; that stretch reads RTMDRCSLAR…GSLPSINSCF (122 aa). 4 disulfides stabilise this stretch: cysteine 25-cysteine 140, cysteine 46-cysteine 130, cysteine 81-cysteine 97, and cysteine 93-cysteine 111. Active-site residues include glutamate 51 and aspartate 69.

This sequence belongs to the glycosyl hydrolase 22 family. In terms of tissue distribution, salivary gland.

The catalysed reaction is Hydrolysis of (1-&gt;4)-beta-linkages between N-acetylmuramic acid and N-acetyl-D-glucosamine residues in a peptidoglycan and between N-acetyl-D-glucosamine residues in chitodextrins.. Unlikely to play an active role in the humoral immune defense. May have a function in the digestion of bacteria in the food. The protein is Lysozyme P (LysP) of Drosophila melanogaster (Fruit fly).